Here is a 448-residue protein sequence, read N- to C-terminus: Protein ECM7 (448 aa).

At Met-1–Arg-28 the chain is on the cytoplasmic side. A helical membrane pass occupies residues Leu-29–Ser-49. Residues Pro-50 to Asn-204 lie on the Extracellular side of the membrane. Residues Val-205–Trp-225 form a helical membrane-spanning segment. The Cytoplasmic segment spans residues Tyr-226–Asn-246. A helical transmembrane segment spans residues Ser-247–Val-267. Over Asn-268–His-287 the chain is Extracellular. Residues Leu-288 to Leu-308 form a helical membrane-spanning segment. Topologically, residues Ala-309–Phe-448 are cytoplasmic. Composition is skewed to polar residues over residues Tyr-351–Gly-363 and Val-383–Asn-406. Disordered stretches follow at residues Tyr-351–Glu-411 and Arg-427–Phe-448.

Its subcellular location is the membrane. Functionally, may be involved in cell wall organization and biogenesis. This Saccharomyces cerevisiae (strain ATCC 204508 / S288c) (Baker's yeast) protein is Protein ECM7 (ECM7).